Consider the following 392-residue polypeptide: FK506-binding protein 4 (392 aa).

Disordered stretches follow at residues 58 to 116 (NPEL…NEID) and 161 to 284 (GNYV…PKTK). Acidic residues-rich tracts occupy residues 73-86 (DGLE…EQEA), 104-116 (SESE…NEID), and 172-219 (SDSD…DASD). Phosphoserine is present on residues Ser80 and Ser82. Composition is skewed to basic and acidic residues over residues 220–234 (IESR…DEKK) and 252–279 (SAKP…ESKP). Positions 306 to 392 (GTRVGMRYVG…TFDVKLVSMK (87 aa)) constitute a PPIase FKBP-type domain.

This sequence belongs to the FKBP-type PPIase family. FKBP3/4 subfamily. Binds to histones H3 and H4. Interacts with NOP53.

The protein resides in the nucleus. The enzyme catalyses [protein]-peptidylproline (omega=180) = [protein]-peptidylproline (omega=0). Functionally, PPIase that acts as a histone chaperone. Histone proline isomerase that increases the rate of cis-trans isomerization at 'Pro-17' (H3P16), 'Pro-31' (H3P30) and 'Pro-39 (H3P38) on the histone H3 N-terminal tail. H3P16 and H3P30 are the major proline targets with little activity shown against H3P38. H3P38 isomerization influences SET2-mediated H3K36 methylation thereby regulating gene expression. This Saccharomyces cerevisiae (strain ATCC 204508 / S288c) (Baker's yeast) protein is FK506-binding protein 4.